Here is an 85-residue protein sequence, read N- to C-terminus: Conotoxin Mi15a (85 aa).

The signal sequence occupies residues 1–23 (MEKLTVLILVATVLLTIQVLGQS). Residues 24 to 49 (DRDKHLKRRPKQYATKRLSARMRGHR) constitute a propeptide that is removed on maturation. The residue at position 50 (Gln-50) is a Pyrrolidone carboxylic acid.

It belongs to the conotoxin O2 superfamily. Contains 4 disulfide bonds. As to expression, expressed by the venom duct.

It is found in the secreted. The chain is Conotoxin Mi15a from Conus miles (Soldier cone).